A 456-amino-acid chain; its full sequence is Bifunctional protein GlmU (456 aa).

Residues 1 to 229 (MTKKALSAVI…VMEVEGANNR (229 aa)) are pyrophosphorylase. UDP-N-acetyl-alpha-D-glucosamine-binding positions include 11-14 (LAAG), Lys-25, Gln-76, 81-82 (GT), 103-105 (YGD), Gly-140, Glu-154, Asn-169, and Asn-227. Asp-105 lines the Mg(2+) pocket. Asn-227 lines the Mg(2+) pocket. The segment at 230–250 (LQLAALERYFQNKQASKLLLE) is linker. An N-acetyltransferase region spans residues 251–456 (GVMIYDPARF…QGWQRPIKKK (206 aa)). Residues Arg-333 and Lys-351 each contribute to the UDP-N-acetyl-alpha-D-glucosamine site. The active-site Proton acceptor is His-363. Residues Tyr-366 and Asn-377 each coordinate UDP-N-acetyl-alpha-D-glucosamine. Acetyl-CoA is bound by residues Ala-380, 386–387 (NY), Ser-405, Ala-423, and Arg-440.

The protein in the N-terminal section; belongs to the N-acetylglucosamine-1-phosphate uridyltransferase family. In the C-terminal section; belongs to the transferase hexapeptide repeat family. As to quaternary structure, homotrimer. Requires Mg(2+) as cofactor.

The protein localises to the cytoplasm. The catalysed reaction is alpha-D-glucosamine 1-phosphate + acetyl-CoA = N-acetyl-alpha-D-glucosamine 1-phosphate + CoA + H(+). It carries out the reaction N-acetyl-alpha-D-glucosamine 1-phosphate + UTP + H(+) = UDP-N-acetyl-alpha-D-glucosamine + diphosphate. The protein operates within nucleotide-sugar biosynthesis; UDP-N-acetyl-alpha-D-glucosamine biosynthesis; N-acetyl-alpha-D-glucosamine 1-phosphate from alpha-D-glucosamine 6-phosphate (route II): step 2/2. Its pathway is nucleotide-sugar biosynthesis; UDP-N-acetyl-alpha-D-glucosamine biosynthesis; UDP-N-acetyl-alpha-D-glucosamine from N-acetyl-alpha-D-glucosamine 1-phosphate: step 1/1. It functions in the pathway bacterial outer membrane biogenesis; LPS lipid A biosynthesis. Catalyzes the last two sequential reactions in the de novo biosynthetic pathway for UDP-N-acetylglucosamine (UDP-GlcNAc). The C-terminal domain catalyzes the transfer of acetyl group from acetyl coenzyme A to glucosamine-1-phosphate (GlcN-1-P) to produce N-acetylglucosamine-1-phosphate (GlcNAc-1-P), which is converted into UDP-GlcNAc by the transfer of uridine 5-monophosphate (from uridine 5-triphosphate), a reaction catalyzed by the N-terminal domain. The polypeptide is Bifunctional protein GlmU (Haemophilus influenzae (strain ATCC 51907 / DSM 11121 / KW20 / Rd)).